A 521-amino-acid polypeptide reads, in one-letter code: Bifunctional purine biosynthesis protein PurH (521 aa).

The MGS-like domain maps to 1–147; sequence MAVIKRALIS…KNNRDVTVVV (147 aa).

Belongs to the PurH family.

The catalysed reaction is (6R)-10-formyltetrahydrofolate + 5-amino-1-(5-phospho-beta-D-ribosyl)imidazole-4-carboxamide = 5-formamido-1-(5-phospho-D-ribosyl)imidazole-4-carboxamide + (6S)-5,6,7,8-tetrahydrofolate. It carries out the reaction IMP + H2O = 5-formamido-1-(5-phospho-D-ribosyl)imidazole-4-carboxamide. It participates in purine metabolism; IMP biosynthesis via de novo pathway; 5-formamido-1-(5-phospho-D-ribosyl)imidazole-4-carboxamide from 5-amino-1-(5-phospho-D-ribosyl)imidazole-4-carboxamide (10-formyl THF route): step 1/1. The protein operates within purine metabolism; IMP biosynthesis via de novo pathway; IMP from 5-formamido-1-(5-phospho-D-ribosyl)imidazole-4-carboxamide: step 1/1. This is Bifunctional purine biosynthesis protein PurH from Syntrophotalea carbinolica (strain DSM 2380 / NBRC 103641 / GraBd1) (Pelobacter carbinolicus).